The sequence spans 251 residues: Enolase-phosphatase E1 (251 aa).

2 residues coordinate Mg(2+): aspartate 13 and glutamate 15. Substrate is bound by residues 137-138 and lysine 183; that span reads SS. A Mg(2+)-binding site is contributed by aspartate 210.

It belongs to the HAD-like hydrolase superfamily. MasA/MtnC family. In terms of assembly, monomer. Mg(2+) is required as a cofactor.

Its subcellular location is the cytoplasm. The protein localises to the nucleus. The catalysed reaction is 5-methylsulfanyl-2,3-dioxopentyl phosphate + H2O = 1,2-dihydroxy-5-(methylsulfanyl)pent-1-en-3-one + phosphate. The protein operates within amino-acid biosynthesis; L-methionine biosynthesis via salvage pathway; L-methionine from S-methyl-5-thio-alpha-D-ribose 1-phosphate: step 3/6. It functions in the pathway amino-acid biosynthesis; L-methionine biosynthesis via salvage pathway; L-methionine from S-methyl-5-thio-alpha-D-ribose 1-phosphate: step 4/6. Bifunctional enzyme that catalyzes the enolization of 2,3-diketo-5-methylthiopentyl-1-phosphate (DK-MTP-1-P) into the intermediate 2-hydroxy-3-keto-5-methylthiopentenyl-1-phosphate (HK-MTPenyl-1-P), which is then dephosphorylated to form the acireductone 1,2-dihydroxy-3-keto-5-methylthiopentene (DHK-MTPene). The polypeptide is Enolase-phosphatase E1 (Candida glabrata (strain ATCC 2001 / BCRC 20586 / JCM 3761 / NBRC 0622 / NRRL Y-65 / CBS 138) (Yeast)).